The sequence spans 365 residues: MTDQAQQKRILIMAGGTGGHVFPALAVAKYLSQQGWKVRWLGTADRMEARLVPQHGFDIDFLDIKGVRGNGLLRKLAAPFKILRSVMQARSVIQDFKPDVVMGMGGFASGPGGVAARLSGIPLVLHEQNAIPGMTNKLLSKVATEVLCAFPDTFTDVRAETVGNPIRKELIALGGNRDKACEEEALKVLVVGGSLGAKIFNDVMPGALEGVSKTHPMTVWHQVGRNNLASVKAEYQHLGQDGSVKVAEFIDDMEAAYRWADVVVCRSGALTVSELAAVGLPSLLVPYPHAVDDHQTKNAQVLVEAGAAFLLPQPLVDSSKLISKLSMLASDRKELCKMGERARDVAVLDATQRVAYACIKLAEKG.

Residues 17-19 (TGG), N129, R167, S194, I250, 269-274 (ALTVSE), and Q295 each bind UDP-N-acetyl-alpha-D-glucosamine.

It belongs to the glycosyltransferase 28 family. MurG subfamily.

It is found in the cell inner membrane. It catalyses the reaction di-trans,octa-cis-undecaprenyl diphospho-N-acetyl-alpha-D-muramoyl-L-alanyl-D-glutamyl-meso-2,6-diaminopimeloyl-D-alanyl-D-alanine + UDP-N-acetyl-alpha-D-glucosamine = di-trans,octa-cis-undecaprenyl diphospho-[N-acetyl-alpha-D-glucosaminyl-(1-&gt;4)]-N-acetyl-alpha-D-muramoyl-L-alanyl-D-glutamyl-meso-2,6-diaminopimeloyl-D-alanyl-D-alanine + UDP + H(+). It functions in the pathway cell wall biogenesis; peptidoglycan biosynthesis. Functionally, cell wall formation. Catalyzes the transfer of a GlcNAc subunit on undecaprenyl-pyrophosphoryl-MurNAc-pentapeptide (lipid intermediate I) to form undecaprenyl-pyrophosphoryl-MurNAc-(pentapeptide)GlcNAc (lipid intermediate II). This chain is UDP-N-acetylglucosamine--N-acetylmuramyl-(pentapeptide) pyrophosphoryl-undecaprenol N-acetylglucosamine transferase, found in Shewanella piezotolerans (strain WP3 / JCM 13877).